Reading from the N-terminus, the 371-residue chain is Chaperone protein DnaJ (371 aa).

The J domain occupies Glu5–Gly69. The segment at Gly127 to Thr209 adopts a CR-type zinc-finger fold. Residues Cys140, Cys143, Cys157, Cys160, Cys183, Cys186, Cys197, and Cys200 each contribute to the Zn(2+) site. 4 CXXCXGXG motif repeats span residues Cys140–Gly147, Cys157–Gly164, Cys183–Gly190, and Cys197–Gly204.

The protein belongs to the DnaJ family. Homodimer. The cofactor is Zn(2+).

The protein resides in the cytoplasm. Functionally, participates actively in the response to hyperosmotic and heat shock by preventing the aggregation of stress-denatured proteins and by disaggregating proteins, also in an autonomous, DnaK-independent fashion. Unfolded proteins bind initially to DnaJ; upon interaction with the DnaJ-bound protein, DnaK hydrolyzes its bound ATP, resulting in the formation of a stable complex. GrpE releases ADP from DnaK; ATP binding to DnaK triggers the release of the substrate protein, thus completing the reaction cycle. Several rounds of ATP-dependent interactions between DnaJ, DnaK and GrpE are required for fully efficient folding. Also involved, together with DnaK and GrpE, in the DNA replication of plasmids through activation of initiation proteins. The sequence is that of Chaperone protein DnaJ from Streptococcus agalactiae serotype Ia (strain ATCC 27591 / A909 / CDC SS700).